The chain runs to 177 residues: ATP synthase subunit delta (177 aa).

Belongs to the ATPase delta chain family. As to quaternary structure, F-type ATPases have 2 components, F(1) - the catalytic core - and F(0) - the membrane proton channel. F(1) has five subunits: alpha(3), beta(3), gamma(1), delta(1), epsilon(1). F(0) has three main subunits: a(1), b(2) and c(10-14). The alpha and beta chains form an alternating ring which encloses part of the gamma chain. F(1) is attached to F(0) by a central stalk formed by the gamma and epsilon chains, while a peripheral stalk is formed by the delta and b chains.

It localises to the cell inner membrane. Functionally, f(1)F(0) ATP synthase produces ATP from ADP in the presence of a proton or sodium gradient. F-type ATPases consist of two structural domains, F(1) containing the extramembraneous catalytic core and F(0) containing the membrane proton channel, linked together by a central stalk and a peripheral stalk. During catalysis, ATP synthesis in the catalytic domain of F(1) is coupled via a rotary mechanism of the central stalk subunits to proton translocation. This protein is part of the stalk that links CF(0) to CF(1). It either transmits conformational changes from CF(0) to CF(1) or is implicated in proton conduction. The sequence is that of ATP synthase subunit delta from Sulfurimonas denitrificans (strain ATCC 33889 / DSM 1251) (Thiomicrospira denitrificans (strain ATCC 33889 / DSM 1251)).